The chain runs to 882 residues: Valine--tRNA ligase (882 aa).

Positions Pro-45–His-55 match the 'HIGH' region motif. Positions Lys-525–Ser-529 match the 'KMSKS' region motif. ATP is bound at residue Lys-528. Positions Glu-812–Ala-881 form a coiled coil.

The protein belongs to the class-I aminoacyl-tRNA synthetase family. ValS type 1 subfamily. As to quaternary structure, monomer.

It is found in the cytoplasm. The enzyme catalyses tRNA(Val) + L-valine + ATP = L-valyl-tRNA(Val) + AMP + diphosphate. Its function is as follows. Catalyzes the attachment of valine to tRNA(Val). As ValRS can inadvertently accommodate and process structurally similar amino acids such as threonine, to avoid such errors, it has a 'posttransfer' editing activity that hydrolyzes mischarged Thr-tRNA(Val) in a tRNA-dependent manner. This is Valine--tRNA ligase from Leptospira interrogans serogroup Icterohaemorrhagiae serovar copenhageni (strain Fiocruz L1-130).